The chain runs to 278 residues: uncharacterized protein (278 aa).

Residues 1 to 34 are Cytoplasmic-facing; sequence MAKTIKVIRKKDPKKKNLSDPLAKQKLVWKIGHV. The helical transmembrane segment at 35-55 threads the bilayer; that stretch reads LTLVFGLLFSITYFYHVLIFF. Residues 56–129 lie on the Extracellular side of the membrane; the sequence is KYRSWKWLFL…DLLSSENFHT (74 aa). Residues 130–150 traverse the membrane as a helical segment; sequence LLIACLWFFGGGKSFYKILPY. Residues 151–180 lie on the Cytoplasmic side of the membrane; the sequence is MILSYLHLTKMNYELNANKEEKIPLTPKDR. Residues 181–201 form a helical membrane-spanning segment; it reads KMLHLLAYSELLVILALTLDT. The Extracellular segment spans residues 202–205; sequence ILFK. A helical membrane pass occupies residues 206–222; that stretch reads TGTSGFMLVIYVGIYWL. Residues 223–278 lie on the Cytoplasmic side of the membrane; it reads RLNFSPYAQVAVLELLVKFEKYVPKKYRDKWQVIKNFIYMKMKEHEKRTEEVARYA.

It localises to the cell membrane. This is an uncharacterized protein from Saccharomyces cerevisiae (strain ATCC 204508 / S288c) (Baker's yeast).